The sequence spans 369 residues: Dual-specificity RNA methyltransferase RlmN (369 aa).

The active-site Proton acceptor is the glutamate 96. The Radical SAM core domain maps to 102–338; that stretch reads DGERGTLCVS…VTTIRTTRGD (237 aa). Cysteine 109 and cysteine 344 form a disulfide bridge. Residues cysteine 116, cysteine 120, and cysteine 123 each coordinate [4Fe-4S] cluster. S-adenosyl-L-methionine contacts are provided by residues 169 to 170, serine 201, 223 to 225, and asparagine 301; these read GE and SLH. Cysteine 344 (S-methylcysteine intermediate) is an active-site residue.

It belongs to the radical SAM superfamily. RlmN family. It depends on [4Fe-4S] cluster as a cofactor.

It is found in the cytoplasm. It catalyses the reaction adenosine(2503) in 23S rRNA + 2 reduced [2Fe-2S]-[ferredoxin] + 2 S-adenosyl-L-methionine = 2-methyladenosine(2503) in 23S rRNA + 5'-deoxyadenosine + L-methionine + 2 oxidized [2Fe-2S]-[ferredoxin] + S-adenosyl-L-homocysteine. The enzyme catalyses adenosine(37) in tRNA + 2 reduced [2Fe-2S]-[ferredoxin] + 2 S-adenosyl-L-methionine = 2-methyladenosine(37) in tRNA + 5'-deoxyadenosine + L-methionine + 2 oxidized [2Fe-2S]-[ferredoxin] + S-adenosyl-L-homocysteine. In terms of biological role, specifically methylates position 2 of adenine 2503 in 23S rRNA and position 2 of adenine 37 in tRNAs. m2A2503 modification seems to play a crucial role in the proofreading step occurring at the peptidyl transferase center and thus would serve to optimize ribosomal fidelity. In Marinobacter nauticus (strain ATCC 700491 / DSM 11845 / VT8) (Marinobacter aquaeolei), this protein is Dual-specificity RNA methyltransferase RlmN.